Reading from the N-terminus, the 487-residue chain is Homeobox protein homothorax (487 aa).

3 disordered regions span residues 25–49, 210–292, and 333–369; these read YDPHAGHRPPGLQGLPSHHSPHMTH, DTTK…SSLN, and NFGTSASGDASNASIGSGEGTGEEDDDASGKKNQKKR. The region spanning 127-211 is the MEIS N-terminal domain; sequence GGDVCSSESF…IDLVIDERDT (85 aa). 2 stretches are compositionally biased toward polar residues: residues 227–237 and 333–345; these read NADSTSHTDGA and NFGTSASGDASNA. The homeobox; TALE-type DNA-binding region spans 365–427; sequence NQKKRGIFPK…NARRRIVQPM (63 aa).

The protein belongs to the TALE/MEIS homeobox family. Interacts with exd; required for nuclear translocation of exd. In the wing disk, the expression is present in the regions corresponding to notum, wing hinge and ventral pleura. In the leg disk, the expression is in the periphery region, corresponding to the proximal segments of the legs. In the antennal disk, the expression is in all but the arista region. In the eye disk, the expression is strong in the anterior region surrounding the eye field, including the regions corresponding to ptilinum, ocellus and head capsules, and weak in the posterior and lateral margins of the eye disk. Expressed specifically in maturating inner photoreceptors of the DRA and maintained through adulthood.

It is found in the nucleus. All isoforms are required for patterning of the embryonic cuticle. Acts with exd to delimit the eye field and prevent inappropriate eye development. Isoforms that carry the homeodomain are required for proper localization of chordotonal organs within the peripheral nervous system and antennal identity; required to activate antennal-specific genes, such as sal and to repress the leg-like expression of dac. Necessary for the nuclear localization of the essential HOX cofactor, extradenticle (exd). Both necessary and sufficient for inner photoreceptors to adopt the polarization-sensitive 'dorsal rim area' (DRA) of the eye fate instead of the color-sensitive default state. This occurs by increasing rhabdomere size and uncoupling R7-R8 communication to allow both cells to express the same opsin rather than different ones as required for color vision. The polypeptide is Homeobox protein homothorax (Drosophila melanogaster (Fruit fly)).